We begin with the raw amino-acid sequence, 281 residues long: Putative phosphatase MPN_264 (281 aa).

Catalysis depends on aspartate 8, which acts as the Nucleophile. Aspartate 8 is a binding site for Mg(2+). Phosphate is bound at residue leucine 9. Aspartate 10 lines the Mg(2+) pocket. Phosphate-binding positions include threonine 44–glycine 45 and lysine 205. Aspartate 228 and serine 229 together coordinate Mg(2+). Residue asparagine 231 participates in phosphate binding.

This sequence belongs to the HAD-like hydrolase superfamily. Cof family. Mg(2+) serves as cofactor.

The polypeptide is Putative phosphatase MPN_264 (Mycoplasma pneumoniae (strain ATCC 29342 / M129 / Subtype 1) (Mycoplasmoides pneumoniae)).